The primary structure comprises 228 residues: Urease accessory protein UreF (228 aa).

The protein belongs to the UreF family. In terms of assembly, ureD, UreF and UreG form a complex that acts as a GTP-hydrolysis-dependent molecular chaperone, activating the urease apoprotein by helping to assemble the nickel containing metallocenter of UreC. The UreE protein probably delivers the nickel.

It is found in the cytoplasm. In terms of biological role, required for maturation of urease via the functional incorporation of the urease nickel metallocenter. The polypeptide is Urease accessory protein UreF (Yersinia pseudotuberculosis serotype IB (strain PB1/+)).